The following is a 328-amino-acid chain: DNA-directed RNA polymerase subunit alpha (328 aa).

Positions 1-234 are alpha N-terminal domain (alpha-NTD); it reads MQGSVTEFLK…EQLDAFVDLR (234 aa). The interval 248 to 328 is alpha C-terminal domain (alpha-CTD); sequence FXPILLRPVD…NWPPASIAED (81 aa).

It belongs to the RNA polymerase alpha chain family. Homodimer. The RNAP catalytic core consists of 2 alpha, 1 beta, 1 beta' and 1 omega subunit. When a sigma factor is associated with the core the holoenzyme is formed, which can initiate transcription.

It carries out the reaction RNA(n) + a ribonucleoside 5'-triphosphate = RNA(n+1) + diphosphate. DNA-dependent RNA polymerase catalyzes the transcription of DNA into RNA using the four ribonucleoside triphosphates as substrates. This chain is DNA-directed RNA polymerase subunit alpha, found in Haemophilus influenzae (strain ATCC 51907 / DSM 11121 / KW20 / Rd).